The primary structure comprises 211 residues: Adenylyl-sulfate kinase (211 aa).

Residue 36 to 43 coordinates ATP; that stretch reads GLSGSGKS. The active-site Phosphoserine intermediate is the S110.

It belongs to the APS kinase family.

The enzyme catalyses adenosine 5'-phosphosulfate + ATP = 3'-phosphoadenylyl sulfate + ADP + H(+). It functions in the pathway sulfur metabolism; hydrogen sulfide biosynthesis; sulfite from sulfate: step 2/3. Its function is as follows. Catalyzes the synthesis of activated sulfate. The polypeptide is Adenylyl-sulfate kinase (cysC) (Buchnera aphidicola subsp. Schizaphis graminum (strain Sg)).